The primary structure comprises 187 residues: Flavin prenyltransferase UbiX (187 aa).

Residues 9 to 11 (GAS), serine 34, and arginine 123 each bind FMN. Positions 153 and 169 each coordinate dimethylallyl phosphate.

The protein belongs to the UbiX/PAD1 family.

It carries out the reaction dimethylallyl phosphate + FMNH2 = prenylated FMNH2 + phosphate. Flavin prenyltransferase that catalyzes the synthesis of the prenylated FMN cofactor (prenyl-FMN) for 4-hydroxy-3-polyprenylbenzoic acid decarboxylase UbiD. The prenyltransferase is metal-independent and links a dimethylallyl moiety from dimethylallyl monophosphate (DMAP) to the flavin N5 and C6 atoms of FMN. In Helicobacter pylori (strain ATCC 700392 / 26695) (Campylobacter pylori), this protein is Flavin prenyltransferase UbiX.